Reading from the N-terminus, the 67-residue chain is Non-specific lipid-transfer protein 2P (67 aa).

Cystine bridges form between Cys2–Cys34, Cys10–Cys24, Cys25–Cys60, and Cys36–Cys67.

Transfer lipids across membranes. May play a role in plant defense or in the biosynthesis of cuticle layers. The protein is Non-specific lipid-transfer protein 2P of Triticum aestivum (Wheat).